Here is a 308-residue protein sequence, read N- to C-terminus: Glutaminase (308 aa).

Residues serine 66, asparagine 117, glutamate 161, asparagine 168, tyrosine 192, tyrosine 244, and valine 262 each coordinate substrate.

Belongs to the glutaminase family. Homotetramer.

It carries out the reaction L-glutamine + H2O = L-glutamate + NH4(+). The chain is Glutaminase from Proteus mirabilis (strain HI4320).